Here is a 137-residue protein sequence, read N- to C-terminus: Putative pre-16S rRNA nuclease (137 aa).

It belongs to the YqgF nuclease family.

The protein localises to the cytoplasm. Could be a nuclease involved in processing of the 5'-end of pre-16S rRNA. The chain is Putative pre-16S rRNA nuclease from Anaeromyxobacter dehalogenans (strain 2CP-C).